Reading from the N-terminus, the 250-residue chain is Testis-expressed protein 101 (250 aa).

Positions 1–25 (MGACRIQYILLVFLLIASHWTLVQN) are cleaved as a signal peptide. 4 N-linked (GlcNAc...) asparagine glycosylation sites follow: Asn-45, Asn-110, Asn-134, and Asn-160. Residues 141–215 (CPTCLALEPC…VKETCSYQSF (75 aa)) enclose the UPAR/Ly6 domain. Gly-224 carries the GPI-anchor amidated glycine lipid modification. A propeptide spans 225–250 (ASWMPTSLWVLELLLPALSLPLIYFP) (removed in mature form).

Interacts with VAMP3. Interacts with LY6K. Interacts with DPEP3; co-localized on the cell surface of spermatocytes, spermatids, and testicular spermatozoa, co-localized only in cytoplasmic droplets of caput and corpus epididymal sperm. Interacts with ADAM5. N-glycosylated; by high mannose and/or biantennary complex and/or certain types of hybrid oligosaccharides; possesses different oligosaccharides chains according to its subcellular localization in the testis. Post-translationally, sheds from membrane raft by ACE and released from the cell surface of epididymal sperm while it passes through the caput epididymis leading to disappearance of TEX101 on spermatozoa; is essential to produce fertile spermatozoa. As to expression, detected in testis.

The protein localises to the cell membrane. It localises to the membrane raft. Its subcellular location is the cytoplasmic vesicle. The protein resides in the secretory vesicle. It is found in the acrosome. The protein localises to the secreted. Functionally, plays a role in fertilization by controlling binding of sperm to zona pellucida and migration of spermatozoa into the oviduct. May play a role in signal transduction and promote protein tyrosine phosphorylation. The polypeptide is Testis-expressed protein 101 (Rattus norvegicus (Rat)).